The primary structure comprises 247 residues: Aliphatic sulfonates import ATP-binding protein SsuB 3 (247 aa).

Residues valine 28–leucine 242 enclose the ABC transporter domain. Glycine 60–threonine 67 lines the ATP pocket.

This sequence belongs to the ABC transporter superfamily. Aliphatic sulfonates importer (TC 3.A.1.17.2) family. The complex is composed of two ATP-binding proteins (SsuB), two transmembrane proteins (SsuC) and a solute-binding protein (SsuA).

The protein localises to the cell inner membrane. It catalyses the reaction ATP + H2O + aliphatic sulfonate-[sulfonate-binding protein]Side 1 = ADP + phosphate + aliphatic sulfonateSide 2 + [sulfonate-binding protein]Side 1.. Its function is as follows. Part of the ABC transporter complex SsuABC involved in aliphatic sulfonates import. Responsible for energy coupling to the transport system. The chain is Aliphatic sulfonates import ATP-binding protein SsuB 3 from Paraburkholderia xenovorans (strain LB400).